We begin with the raw amino-acid sequence, 532 residues long: Chondroitin sulfate N-acetylgalactosaminyltransferase 1 (532 aa).

Topologically, residues 1–14 (MMMVRRGLLAWISR) are cytoplasmic. The helical; Signal-anchor for type II membrane protein transmembrane segment at 15-35 (VVVLLVLLCCAISVLYMLACT) threads the bilayer. The Lumenal portion of the chain corresponds to 36-532 (PKGDEEQLAL…QKQKTSSKKT (497 aa)). The stretch at 57–100 (YQAVLQEWEEQHRNYVSSLKRQIAQLKEELQERSEQLRNGQYQA) forms a coiled coil. N-linked (GlcNAc...) asparagine glycosylation is found at asparagine 315 and asparagine 324. A divalent metal cation-binding residues include aspartate 360 and histidine 477.

It belongs to the chondroitin N-acetylgalactosaminyltransferase family. Post-translationally, N-glycosylated. Ubiquitous, with the highest levels in placenta, thyroid, bladder, prostate and adrenal gland. Detected at low levels in the other tissues examined.

It localises to the golgi apparatus. The protein localises to the golgi stack membrane. The enzyme catalyses 3-O-(beta-D-GlcA-(1-&gt;3)-beta-D-Gal-(1-&gt;3)-beta-D-Gal-(1-&gt;4)-beta-D-Xyl)-L-seryl-[protein] + UDP-N-acetyl-alpha-D-galactosamine = 3-O-(beta-D-GalNAc-(1-&gt;4)-beta-D-GlcA-(1-&gt;3)-beta-D-Gal-(1-&gt;3)-beta-D-Gal-(1-&gt;4)-beta-D-Xyl)-L-seryl-[protein] + UDP + H(+). In terms of biological role, transfers 1,4-N-acetylgalactosamine (GalNAc) from UDP-GalNAc to the non-reducing end of glucuronic acid (GlcUA). Required for addition of the first GalNAc to the core tetrasaccharide linker and for elongation of chondroitin chains. Important role in chondroitin chain biosynthesis in cartilage formation and subsequent endochondral ossification. Moreover, is involved in the metabolism of aggrecan. In Homo sapiens (Human), this protein is Chondroitin sulfate N-acetylgalactosaminyltransferase 1.